The primary structure comprises 837 residues: Translation initiation factor IF-2 (837 aa).

Positions 94-253 (KRSPDEIEAE…QHGFQNPTGP (160 aa)) are disordered. Residues 95 to 148 (RSPDEIEAERQRELEEQRAAEEAERLKAEEAAARQRAEEEARKAEEAARAKAAE) show a composition bias toward basic and acidic residues. Low complexity predominate over residues 149 to 171 (EAVSAQPAAAVEVAAAEPVAKPA). 2 stretches are compositionally biased toward basic and acidic residues: residues 172–188 (AAEE…PKRD) and 220–229 (STDEESDGYR). Basic residues predominate over residues 230 to 244 (RGGRGGKSKLKKRNQ). Residues 337–506 (TRAPVVTVMG…LLQAEVLELK (170 aa)) enclose the tr-type G domain. Residues 346–353 (GHVDHGKT) form a G1 region. Residue 346-353 (GHVDHGKT) participates in GTP binding. Positions 371–375 (GITQH) are G2. The interval 392 to 395 (DTPG) is G3. GTP contacts are provided by residues 392–396 (DTPGH) and 446–449 (NKID). Residues 446–449 (NKID) are G4. The tract at residues 482 to 484 (SAK) is G5.

The protein belongs to the TRAFAC class translation factor GTPase superfamily. Classic translation factor GTPase family. IF-2 subfamily.

It is found in the cytoplasm. Functionally, one of the essential components for the initiation of protein synthesis. Protects formylmethionyl-tRNA from spontaneous hydrolysis and promotes its binding to the 30S ribosomal subunits. Also involved in the hydrolysis of GTP during the formation of the 70S ribosomal complex. This is Translation initiation factor IF-2 from Pseudomonas paraeruginosa (strain DSM 24068 / PA7) (Pseudomonas aeruginosa (strain PA7)).